The primary structure comprises 75 residues: Small ribosomal subunit protein bS18 (75 aa).

It belongs to the bacterial ribosomal protein bS18 family. As to quaternary structure, part of the 30S ribosomal subunit. Forms a tight heterodimer with protein bS6.

Binds as a heterodimer with protein bS6 to the central domain of the 16S rRNA, where it helps stabilize the platform of the 30S subunit. The chain is Small ribosomal subunit protein bS18 from Desulforudis audaxviator (strain MP104C).